Here is a 294-residue protein sequence, read N- to C-terminus: tRNA dimethylallyltransferase (294 aa).

10–17 (GPTAVGKT) is a binding site for ATP. 12-17 (TAVGKT) lines the substrate pocket. The segment at 35 to 38 (DSQQ) is interaction with substrate tRNA.

This sequence belongs to the IPP transferase family. In terms of assembly, monomer. Mg(2+) serves as cofactor.

The catalysed reaction is adenosine(37) in tRNA + dimethylallyl diphosphate = N(6)-dimethylallyladenosine(37) in tRNA + diphosphate. Its function is as follows. Catalyzes the transfer of a dimethylallyl group onto the adenine at position 37 in tRNAs that read codons beginning with uridine, leading to the formation of N6-(dimethylallyl)adenosine (i(6)A). In Streptococcus suis (strain 05ZYH33), this protein is tRNA dimethylallyltransferase.